Reading from the N-terminus, the 516-residue chain is Prolyl 4-hydroxylase subunit alpha-1 (516 aa).

An N-linked (GlcNAc...) asparagine glycan is attached at N97. Residues 189 to 222 (VYILDYLSYAVYQQGDLSKAMMLTKRLLELDPEH) form a TPR repeat. N243 is a glycosylation site (N-linked (GlcNAc...) asparagine). The Fe2OG dioxygenase domain maps to 393–501 (TAEELQVANY…KWVSNKWLHE (109 aa)). Fe cation-binding residues include H411, D413, and H482. K492 lines the 2-oxoglutarate pocket.

This sequence belongs to the P4HA family. Heterotetramer of two alpha chains and two beta chains (the beta chain is the multi-functional PDI). It depends on Fe(2+) as a cofactor. The cofactor is L-ascorbate.

It localises to the endoplasmic reticulum lumen. It carries out the reaction L-prolyl-[collagen] + 2-oxoglutarate + O2 = trans-4-hydroxy-L-prolyl-[collagen] + succinate + CO2. Its function is as follows. Catalyzes the post-translational formation of 4-hydroxyproline in -Xaa-Pro-Gly- sequences in collagens and other proteins. The polypeptide is Prolyl 4-hydroxylase subunit alpha-1 (P4HA1) (Gallus gallus (Chicken)).